We begin with the raw amino-acid sequence, 93 residues long: MTKSELILRLAERNPHLYQRDVEKIVTTIFDEITDALARGDRVELRGFGAFSVKKRDARLGRNPRTGETVDVNQKFIPFFKTGKQLRERLNTD.

This sequence belongs to the bacterial histone-like protein family. Heterodimer of an alpha and a beta chain.

Functionally, this protein is one of the two subunits of integration host factor, a specific DNA-binding protein that functions in genetic recombination as well as in transcriptional and translational control. The sequence is that of Integration host factor subunit beta from Rhodospirillum centenum (strain ATCC 51521 / SW).